The sequence spans 331 residues: Pantothenate kinase (331 aa).

Residue 109 to 116 (GSVAVGKS) participates in ATP binding.

This sequence belongs to the prokaryotic pantothenate kinase family.

The protein resides in the cytoplasm. It catalyses the reaction (R)-pantothenate + ATP = (R)-4'-phosphopantothenate + ADP + H(+). It functions in the pathway cofactor biosynthesis; coenzyme A biosynthesis; CoA from (R)-pantothenate: step 1/5. The chain is Pantothenate kinase from Rhizobium johnstonii (strain DSM 114642 / LMG 32736 / 3841) (Rhizobium leguminosarum bv. viciae).